Consider the following 274-residue polypeptide: 2,3,4,5-tetrahydropyridine-2,6-dicarboxylate N-succinyltransferase (274 aa).

Positions 104 and 141 each coordinate substrate.

This sequence belongs to the transferase hexapeptide repeat family. In terms of assembly, homotrimer.

It is found in the cytoplasm. It carries out the reaction (S)-2,3,4,5-tetrahydrodipicolinate + succinyl-CoA + H2O = (S)-2-succinylamino-6-oxoheptanedioate + CoA. It functions in the pathway amino-acid biosynthesis; L-lysine biosynthesis via DAP pathway; LL-2,6-diaminopimelate from (S)-tetrahydrodipicolinate (succinylase route): step 1/3. The polypeptide is 2,3,4,5-tetrahydropyridine-2,6-dicarboxylate N-succinyltransferase (Shigella dysenteriae serotype 1 (strain Sd197)).